Consider the following 209-residue polypeptide: MSLIDRFIAEFDTALRSVVGGAHSRRPTPGSGEISHANLDVAQRKHAAGLMRVNHVGEVCAQALYQSQKMLARNPQIQVMLEHSGQEEMDHLAWCETRLQELGSHPSYLNPFWYAGSFAIGMLAGLAGDRWSLGFVAETEKQVENHLESHLETLPQEDLRSRAIVDQMRIDEIEHGQAALHAGGVVLPDPVQKVMQAMSKVMTTAAYRI.

Glu58, Glu88, His91, Glu140, Glu172, and His175 together coordinate Fe cation.

This sequence belongs to the COQ7 family. It depends on Fe cation as a cofactor.

The protein localises to the cell membrane. The enzyme catalyses a 5-methoxy-2-methyl-3-(all-trans-polyprenyl)benzene-1,4-diol + AH2 + O2 = a 3-demethylubiquinol + A + H2O. It participates in cofactor biosynthesis; ubiquinone biosynthesis. Catalyzes the hydroxylation of 2-nonaprenyl-3-methyl-6-methoxy-1,4-benzoquinol during ubiquinone biosynthesis. The protein is 3-demethoxyubiquinol 3-hydroxylase of Polynucleobacter asymbioticus (strain DSM 18221 / CIP 109841 / QLW-P1DMWA-1) (Polynucleobacter necessarius subsp. asymbioticus).